Consider the following 127-residue polypeptide: Fluoride-specific ion channel FluC (127 aa).

4 helical membrane-spanning segments follow: residues 4–24, 35–55, 71–91, and 103–123; these read TLLAVFIGGGVGSVARWQLGV, LGTLLANLIGAFVIGGALAFF, TGLCGGLTTFSTFSAEVVMFL, and VLLNLAGSLLMTALAFALVTW. Glycine 75 and threonine 78 together coordinate Na(+).

The protein belongs to the fluoride channel Fluc/FEX (TC 1.A.43) family.

The protein localises to the cell inner membrane. The catalysed reaction is fluoride(in) = fluoride(out). With respect to regulation, na(+) is not transported, but it plays an essential structural role and its presence is essential for fluoride channel function. Its function is as follows. Fluoride-specific ion channel. Important for reducing fluoride concentration in the cell, thus reducing its toxicity. The chain is Fluoride-specific ion channel FluC from Pectobacterium atrosepticum (strain SCRI 1043 / ATCC BAA-672) (Erwinia carotovora subsp. atroseptica).